Consider the following 570-residue polypeptide: Vacuolar protein sorting-associated protein 45 (570 aa).

Phosphoserine occurs at positions 307 and 441.

Belongs to the STXBP/unc-18/SEC1 family. In terms of assembly, interacts with STX6 and ZFYVE20. Ubiquitous; expression was highest in testis and in brain. Detected in every part of the brain.

It is found in the golgi apparatus membrane. It localises to the endosome membrane. Functionally, may play a role in vesicle-mediated protein trafficking from the Golgi stack through the trans-Golgi network. The protein is Vacuolar protein sorting-associated protein 45 (Vps45) of Rattus norvegicus (Rat).